The sequence spans 404 residues: Glucose-1-phosphate adenylyltransferase 2 (404 aa).

Alpha-D-glucose 1-phosphate contacts are provided by residues Tyr97, Gly162, 177 to 178 (EK), and Ser195.

This sequence belongs to the bacterial/plant glucose-1-phosphate adenylyltransferase family. As to quaternary structure, homotetramer.

The catalysed reaction is alpha-D-glucose 1-phosphate + ATP + H(+) = ADP-alpha-D-glucose + diphosphate. Its pathway is glycan biosynthesis; glycogen biosynthesis. Functionally, involved in the biosynthesis of ADP-glucose, a building block required for the elongation reactions to produce glycogen. Catalyzes the reaction between ATP and alpha-D-glucose 1-phosphate (G1P) to produce pyrophosphate and ADP-Glc. The chain is Glucose-1-phosphate adenylyltransferase 2 from Vibrio vulnificus (strain YJ016).